A 464-amino-acid chain; its full sequence is uncharacterized protein (464 aa).

The signal sequence occupies residues 1–24; the sequence is MSRFVPRIIPFYLLLLVAGGTANA.

This sequence belongs to the intimin/invasin family.

Its subcellular location is the periplasm. This is an uncharacterized protein from Escherichia coli (strain K12).